Consider the following 188-residue polypeptide: Elongation factor P 1 (188 aa).

The protein belongs to the elongation factor P family.

It is found in the cytoplasm. The protein operates within protein biosynthesis; polypeptide chain elongation. Involved in peptide bond synthesis. Stimulates efficient translation and peptide-bond synthesis on native or reconstituted 70S ribosomes in vitro. Probably functions indirectly by altering the affinity of the ribosome for aminoacyl-tRNA, thus increasing their reactivity as acceptors for peptidyl transferase. This chain is Elongation factor P 1, found in Mesorhizobium japonicum (strain LMG 29417 / CECT 9101 / MAFF 303099) (Mesorhizobium loti (strain MAFF 303099)).